A 388-amino-acid polypeptide reads, in one-letter code: GTPase Obg (388 aa).

In terms of domain architecture, Obg spans 1-159; sequence MKFVDEAVIR…RSLKLELLLL (159 aa). In terms of domain architecture, OBG-type G spans 160–333; that stretch reads ADVGLLGMPN…LAAKLWDFIQ (174 aa). GTP is bound by residues 166–173, 191–195, 213–216, 283–286, and 314–316; these read GMPNAGKS, FTTLV, DIPG, NKAD, and SAY. Mg(2+) is bound by residues Ser173 and Thr193.

It belongs to the TRAFAC class OBG-HflX-like GTPase superfamily. OBG GTPase family. In terms of assembly, monomer. Requires Mg(2+) as cofactor.

The protein localises to the cytoplasm. Functionally, an essential GTPase which binds GTP, GDP and possibly (p)ppGpp with moderate affinity, with high nucleotide exchange rates and a fairly low GTP hydrolysis rate. Plays a role in control of the cell cycle, stress response, ribosome biogenesis and in those bacteria that undergo differentiation, in morphogenesis control. This is GTPase Obg from Shewanella oneidensis (strain ATCC 700550 / JCM 31522 / CIP 106686 / LMG 19005 / NCIMB 14063 / MR-1).